A 75-amino-acid polypeptide reads, in one-letter code: UPF0270 protein PST_1436 (75 aa).

The protein belongs to the UPF0270 family.

The protein is UPF0270 protein PST_1436 of Stutzerimonas stutzeri (strain A1501) (Pseudomonas stutzeri).